Reading from the N-terminus, the 208-residue chain is MERMNQSRKVPIHDAAEESSAEAHETQEAGNMEEQAREAEIQQEMAEEAVEQAQDAEEAQEEEAADYKDLYLRTLAEFENYRRRADRETNEFKKYANETLIKDIIPVIDNLERAMECTVNTDDPGCAQNLLAGVQMTEREILKVLEKYGVTRISAIGETFDPAYHQALMAEESDEHPDETVIREMQKGYLLKDRLIRPALVAVAKGKA.

Positions 1-27 (MERMNQSRKVPIHDAAEESSAEAHETQ) are enriched in basic and acidic residues. Positions 1–65 (MERMNQSRKV…AEEAQEEEAA (65 aa)) are disordered. The segment covering 45-64 (MAEEAVEQAQDAEEAQEEEA) has biased composition (acidic residues).

Belongs to the GrpE family. As to quaternary structure, homodimer.

It is found in the cytoplasm. Its function is as follows. Participates actively in the response to hyperosmotic and heat shock by preventing the aggregation of stress-denatured proteins, in association with DnaK and GrpE. It is the nucleotide exchange factor for DnaK and may function as a thermosensor. Unfolded proteins bind initially to DnaJ; upon interaction with the DnaJ-bound protein, DnaK hydrolyzes its bound ATP, resulting in the formation of a stable complex. GrpE releases ADP from DnaK; ATP binding to DnaK triggers the release of the substrate protein, thus completing the reaction cycle. Several rounds of ATP-dependent interactions between DnaJ, DnaK and GrpE are required for fully efficient folding. In Desulfatibacillum aliphaticivorans, this protein is Protein GrpE.